The chain runs to 726 residues: NHL repeat-containing protein 2 (726 aa).

Positions Gln43–Asp200 constitute a Thioredoxin domain. 6 NHL repeats span residues Lys212–Asn254, Asn265–Glu307, Ile335–Leu369, Phe409–Val439, Ala461–Lys505, and Thr518–Glu562.

Monomer. As to expression, ubiquitous. Detected in heart, kidney, muscle, brain, lung, liver and in skin fibroblasts (at protein level).

The protein resides in the cytoplasm. The protein localises to the cytosol. In terms of biological role, required for normal embryonic development. The protein is NHL repeat-containing protein 2 (NHLRC2) of Homo sapiens (Human).